The chain runs to 394 residues: Obg-like ATPase 1 (394 aa).

Residues 25-282 enclose the OBG-type G domain; sequence LKIGIVGLPN…MPPDEAAKYC (258 aa). Residues 34–39, 56–60, and 94–97 contribute to the ATP site; these read NVGKST, FCTID, and DIAG. Mg(2+) is bound by residues Ser-38 and Thr-58. Phe-129 contributes to the GTP binding site. Residues 230 to 231, Met-231, and 263 to 265 each bind ATP; these read NM and SCA. 263–265 contacts GTP; the sequence is SCA. In terms of domain architecture, TGS spans 303–386; it reads HLIYFFTAGP…QDADIIFFKF (84 aa).

This sequence belongs to the TRAFAC class OBG-HflX-like GTPase superfamily. OBG GTPase family. YchF/OLA1 subfamily. Monomer (Potential). Interacts with GAP1. Mg(2+) serves as cofactor.

The protein localises to the cytoplasm. The protein resides in the cell membrane. It is found in the cytosol. Activated by GAP1. Hydrolyzes ATP, and can also hydrolyze GTP with lower efficiency. Has lower affinity for GTP (Potential). Exhibits GTPase activity. Exhibits similar binding affinities and hydrolytic activities toward both GTP and ATP. Binds to the 26 S ribosomal RNA in vitro, but not to the 5.8 S or 18 S rRNA. Confers sensitivity to salinity stress by suppressing the anti-oxidation enzymatic activities and increasing lipid peroxidation thus leading to the accumulation of reactive oxygen species (ROS). The protein is Obg-like ATPase 1 of Oryza sativa subsp. indica (Rice).